Reading from the N-terminus, the 297-residue chain is MSVTVRVPAKVNVQLAVGGARPDGFHDLANVFLAVGLYDEVTATPADELRITCEGPDAAQVPLDRTNLAARAAIALAARHGLAPDVHLHIAKDIPVAGGMAGGSADAAGALLACDTLWGTNASRGELLDICAELGSDVPFSLVGGAALGTGRGERLRELEVGGTFHWVFAVADGGLSTPAVYGEFDRLSEGVRVPEPVASQELLDALAKGDAVALAAAVSNDLQPAALSLFPSLSDTLEAGRAAGALAALVSGSGPTTAFLTRDADGADAVAQALLASGTCRTARVAPSPAPGATVL.

Lys10 is a catalytic residue. Residue 95 to 105 participates in ATP binding; that stretch reads PVAGGMAGGSA. Residue Asp137 is part of the active site.

It belongs to the GHMP kinase family. IspE subfamily.

The enzyme catalyses 4-CDP-2-C-methyl-D-erythritol + ATP = 4-CDP-2-C-methyl-D-erythritol 2-phosphate + ADP + H(+). It functions in the pathway isoprenoid biosynthesis; isopentenyl diphosphate biosynthesis via DXP pathway; isopentenyl diphosphate from 1-deoxy-D-xylulose 5-phosphate: step 3/6. Functionally, catalyzes the phosphorylation of the position 2 hydroxy group of 4-diphosphocytidyl-2C-methyl-D-erythritol. The chain is 4-diphosphocytidyl-2-C-methyl-D-erythritol kinase from Streptomyces avermitilis (strain ATCC 31267 / DSM 46492 / JCM 5070 / NBRC 14893 / NCIMB 12804 / NRRL 8165 / MA-4680).